Consider the following 133-residue polypeptide: Agouti-signaling protein (133 aa).

The first 22 residues, 1–22 (MDVSRLLLATLLVCLCFLTAYS), serve as a signal peptide directing secretion. Residue N39 is glycosylated (N-linked (GlcNAc...) asparagine). Residues 56-95 (NKKSKKISRNEAEKKKRPSKRKAPMKNVARTRPPPPTPCV) form a disordered region. The segment covering 70 to 79 (KKRPSKRKAP) has biased composition (basic residues). 5 disulfides stabilise this stretch: C94–C109, C101–C115, C108–C126, C112–C133, and C117–C124. An Agouti domain is found at 94 to 133 (CVATRDSCKPPAPACCDPCAFCQCRFFRSACSCRVLNPTC).

It is found in the secreted. Involved in the regulation of melanogenesis. The binding of ASP to MC1R precludes alpha-MSH initiated signaling and thus blocks production of cAMP, leading to a down-regulation of eumelanogenesis (brown/black pigment) and thus increasing synthesis of pheomelanin (yellow/red pigment). In Bos taurus (Bovine), this protein is Agouti-signaling protein (ASIP).